Reading from the N-terminus, the 564-residue chain is 2-succinyl-5-enolpyruvyl-6-hydroxy-3-cyclohexene-1-carboxylate synthase (564 aa).

Belongs to the TPP enzyme family. MenD subfamily. Homodimer. Mg(2+) serves as cofactor. Requires Mn(2+) as cofactor. The cofactor is thiamine diphosphate.

It catalyses the reaction isochorismate + 2-oxoglutarate + H(+) = 5-enolpyruvoyl-6-hydroxy-2-succinyl-cyclohex-3-ene-1-carboxylate + CO2. It participates in quinol/quinone metabolism; 1,4-dihydroxy-2-naphthoate biosynthesis; 1,4-dihydroxy-2-naphthoate from chorismate: step 2/7. It functions in the pathway quinol/quinone metabolism; menaquinone biosynthesis. Its function is as follows. Catalyzes the thiamine diphosphate-dependent decarboxylation of 2-oxoglutarate and the subsequent addition of the resulting succinic semialdehyde-thiamine pyrophosphate anion to isochorismate to yield 2-succinyl-5-enolpyruvyl-6-hydroxy-3-cyclohexene-1-carboxylate (SEPHCHC). This chain is 2-succinyl-5-enolpyruvyl-6-hydroxy-3-cyclohexene-1-carboxylate synthase, found in Photorhabdus laumondii subsp. laumondii (strain DSM 15139 / CIP 105565 / TT01) (Photorhabdus luminescens subsp. laumondii).